Consider the following 255-residue polypeptide: 4-hydroxy-tetrahydrodipicolinate reductase (255 aa).

Residues glycine 9–methionine 14, aspartate 35, glycine 89–threonine 91, and alanine 115–phenylalanine 118 contribute to the NAD(+) site. The active-site Proton donor/acceptor is the histidine 145. (S)-2,3,4,5-tetrahydrodipicolinate is bound at residue histidine 146. The Proton donor role is filled by lysine 149. Glycine 155–threonine 156 contributes to the (S)-2,3,4,5-tetrahydrodipicolinate binding site.

This sequence belongs to the DapB family.

It localises to the cytoplasm. It catalyses the reaction (S)-2,3,4,5-tetrahydrodipicolinate + NAD(+) + H2O = (2S,4S)-4-hydroxy-2,3,4,5-tetrahydrodipicolinate + NADH + H(+). It carries out the reaction (S)-2,3,4,5-tetrahydrodipicolinate + NADP(+) + H2O = (2S,4S)-4-hydroxy-2,3,4,5-tetrahydrodipicolinate + NADPH + H(+). Its pathway is amino-acid biosynthesis; L-lysine biosynthesis via DAP pathway; (S)-tetrahydrodipicolinate from L-aspartate: step 4/4. Its function is as follows. Catalyzes the conversion of 4-hydroxy-tetrahydrodipicolinate (HTPA) to tetrahydrodipicolinate. The sequence is that of 4-hydroxy-tetrahydrodipicolinate reductase from Streptococcus pneumoniae serotype 19F (strain G54).